We begin with the raw amino-acid sequence, 1011 residues long: MKLLSSWVVAALAAQAAGAAISHKLDGFTIREHADPAKRALLQKYVTWDEHSIFVNGERLMIFSGEVHPYRLPVASLYIDIFEKVKALGFNCVSFYVDWALLEGNPGHYSAEGIFDLQPFFDAAKEAGIYLLARPGPYINAEVSGGGFPGWLQRVDGILRTSDEAYLKATDNYASNIAATIAKAQITNGGPIILYQPENEYSGACCGYNGFPDGSYMQYIEDHARDAGIVVPFISNDAWAAGHNAPGTGAGAVDIYGHDSYPLGFDCANPSTWPSGNLPTYFHTSHEQQSPSTPYSLVEFQGGAFDPWGGVGFAKCAALLNHEFERVFYKNDFSFGVAFLNLYMIFGGTNWGNLGHPGGYTSYDYGSAISESRNITREKYSELKLLGNFAKVSPGYLVANPGDLSTSTYTNTADLTVTPLLGSNSSASSFFVIRHSDYSSQASVEYKLTVPTSAGNLTIPQLGGSLTLSGRDSKIHVTDYDVAGTNILYSTAEVFTWKKFNNEKVLVLYGGPGEHHEFAVSGASSSSVVEGSSSGISSKKVGKALVVAWDVSTARRIVQVGSLKVFLLDRNSAYNYWVPQVPTKGTAPGYSNQETTASSIIVKAGYLVRSAYLDGNDLHIQADFNATTPIEVVGAPSGAKNLVINGKKTQTKVDKNGIWSASVAYTAPKVQLPSLKSLKWKSVDTLPEAKNTYDDSAWTSADHAYTNNSAHSLQTPTSLFASDYGYHTGALLFRGHFTANGKEKTFFVQTKGGTAYGHSIWINETYVGSWAGTSINDNNNATYTLPTLQSGKNYVITVVIDNMGLDEDWTIGSEDMKNPRGIIQYSLSGQEASAISWKLTGNLGGENYRDTVRGPLNEGGLYAERQGFHQPQPPTQKWDSSSPFTGLTKPGIRFYSTSFDLDLPSGYDIPLYFNFGNSTSTPAAYRVQLYVNGYQYGKYVNNIGPQTSFPVPEGILNYHGTNWLALSLWAQEDNGAKLDSFELINTTPVLTSLGEVKSVNQPKYQARKGAY.

The N-terminal stretch at 1–19 (MKLLSSWVVAALAAQAAGA) is a signal peptide. Substrate-binding positions include tyrosine 96, 140–142 (NAE), and asparagine 199. The active-site Proton donor is the glutamate 200. 2 cysteine pairs are disulfide-bonded: cysteine 205–cysteine 206 and cysteine 267–cysteine 316. The Nucleophile role is filled by glutamate 299. Tyrosine 365 serves as a coordination point for substrate. 7 N-linked (GlcNAc...) asparagine glycosylation sites follow: asparagine 374, asparagine 456, asparagine 625, asparagine 707, asparagine 763, asparagine 780, and asparagine 917.

It belongs to the glycosyl hydrolase 35 family. As to quaternary structure, monomer.

Its subcellular location is the secreted. It catalyses the reaction Hydrolysis of terminal non-reducing beta-D-galactose residues in beta-D-galactosides.. Its function is as follows. Cleaves beta-linked terminal galactosyl residues from gangliosides, glycoproteins, and glycosaminoglycans. Has high in vitro transglycosylation activity with p-nitrophenyl-beta-D-galactopyranoside, methyl-beta-D-galactopyranoside or lactose as a donor and galactose as an acceptor. The chain is Beta-galactosidase A (lacA) from Penicillium sp.